Here is a 406-residue protein sequence, read N- to C-terminus: Terminal uridylyltransferase 7 (406 aa).

The transit peptide at 1–15 directs the protein to the mitochondrion; it reads MNVAKREFIRGMMAH. Residues Ser-54 and 64–65 contribute to the UTP site; that span reads SD. Mg(2+) is bound by residues Asp-65 and Asp-67. Residues 138–142, Lys-164, Lys-168, and 181–183 each bind UTP; these read GVENS and NSF.

The protein belongs to the DNA polymerase type-B-like family. Component of the mitochondrial RNA editing core complex-like (RECC-like), also known as the editosome-like complex; only a small proportion of MEAT1 associates with the complex. Interacts with RNA-editing ligase REL1. Requires Mg(2+) as cofactor.

Its subcellular location is the mitochondrion matrix. The enzyme catalyses RNA(n) + UTP = RNA(n)-3'-uridine ribonucleotide + diphosphate. Terminal uridylyltransferase which, as part of the mitochondrial RNA editing core-like complex (RECC-like), is involved in the post-transcriptional editing of mitochondrial RNA, a process involving the addition and deletion of uridine (U) nucleotides in the pre-mRNA. Specifically, catalyzes the addition of U to single-stranded RNA with a preference for a 3'-terminal U and adds the number of Us specified by a guide RNA (gRNA) to precleaved double-stranded RNA editing substrates. Essential for insect and bloodstream developmental forms viability. The protein is Terminal uridylyltransferase 7 of Trypanosoma brucei brucei.